The sequence spans 280 residues: MKLLLVLLTIASVALAAVDDVAVNNFKVGILAKDQQPSDENLKTVALFSKLPNELKADASQRLYVSFTVAKKSDNAKVKPHQVFLRFVAQNGEDVVVVVNPDANGNYVYDNVLRTAAKSFRNLSGQFKISLLVGDVTIKNPINWQFANIDAALPVAYEPTPKSQQVHFEPLNEISHIFRQPEKRPSALISDLFTIICLSPLLILVVLWSQVGINFQNAPASPWVPIFHVGLIGIFGIYFMFWVQFDMFVTLKYLAVLGFLTFVAGNRVLRAISESKQKSE.

A signal peptide spans 1–16 (MKLLLVLLTIASVALA). Residues 17-187 (AVDDVAVNNF…FRQPEKRPSA (171 aa)) lie on the Lumenal side of the membrane. The helical transmembrane segment at 188-208 (LISDLFTIICLSPLLILVVLW) threads the bilayer. Residues 209–222 (SQVGINFQNAPASP) lie on the Cytoplasmic side of the membrane. A helical membrane pass occupies residues 223–243 (WVPIFHVGLIGIFGIYFMFWV). A topological domain (lumenal) is located at residue Q244. Residues 245–265 (FDMFVTLKYLAVLGFLTFVAG) traverse the membrane as a helical segment. Residues 266–280 (NRVLRAISESKQKSE) lie on the Cytoplasmic side of the membrane.

This sequence belongs to the SWP1 family. As to quaternary structure, component of the oligosaccharyltransferase (OST) complex.

The protein resides in the endoplasmic reticulum membrane. It participates in protein modification; protein glycosylation. Functionally, subunit of the oligosaccharyl transferase (OST) complex that catalyzes the initial transfer of a defined glycan (Glc(3)Man(9)GlcNAc(2) in eukaryotes) from the lipid carrier dolichol-pyrophosphate to an asparagine residue within an Asn-X-Ser/Thr consensus motif in nascent polypeptide chains, the first step in protein N-glycosylation. N-glycosylation occurs cotranslationally and the complex associates with the Sec61 complex at the channel-forming translocon complex that mediates protein translocation across the endoplasmic reticulum (ER). All subunits are required for a maximal enzyme activity. This Caenorhabditis elegans protein is Dolichyl-diphosphooligosaccharide--protein glycosyltransferase subunit 2.